The chain runs to 94 residues: MLKPLGDRVVIELVQAEEKTASGIVLPETAKEKPQEGKVIAVGTGRVLENGERVALEVAAGDLIIFSKYAGTEVKYEGTDYLILRESDILAIIG.

The protein belongs to the GroES chaperonin family. In terms of assembly, heptamer of 7 subunits arranged in a ring. Interacts with the chaperonin GroEL.

It localises to the cytoplasm. Functionally, together with the chaperonin GroEL, plays an essential role in assisting protein folding. The GroEL-GroES system forms a nano-cage that allows encapsulation of the non-native substrate proteins and provides a physical environment optimized to promote and accelerate protein folding. GroES binds to the apical surface of the GroEL ring, thereby capping the opening of the GroEL channel. In Bacillus mycoides (strain KBAB4) (Bacillus weihenstephanensis), this protein is Co-chaperonin GroES.